We begin with the raw amino-acid sequence, 396 residues long: Gap junction gamma-1 protein (396 aa).

The Cytoplasmic portion of the chain corresponds to 1–22 (MSWSFLTRLLEEIHNHSTFVGK). A helical transmembrane segment spans residues 23–45 (IWLTVLIVFRIVLTAVGGESIYY). At 46-75 (DEQSKFVCNTEQPGCENVCYDAFAPLSHVR) the chain is on the extracellular side. A helical membrane pass occupies residues 76–95 (FWVFQIILVATPSVMYLGYA). Residues 96–175 (IHKIAKMEHG…RRIREDGLMK (80 aa)) lie on the Cytoplasmic side of the membrane. Residues 145–165 (ELESDKENKEQSQPKPKHDGR) form a disordered region. Residues 147 to 156 (ESDKENKEQS) show a composition bias toward basic and acidic residues. The helical transmembrane segment at 176-198 (IYVLQLLARTVFEVGFLIGQYFL) threads the bilayer. The Extracellular portion of the chain corresponds to 199–228 (YGFQVHPFYVCSRLPCPHKIDCFISRPTEK). Residues 229–248 (TIFLLIMYGVTGLCLLLNIW) form a helical membrane-spanning segment. At 249–396 (EMLHLGFGTI…SGDGKTSVWI (148 aa)) the chain is on the cytoplasmic side. Residues 353 to 396 (VQAYSHQNNPHGPREKKAKVGSKAGSNKSTASSKSGDGKTSVWI) are disordered. The segment covering 376–387 (AGSNKSTASSKS) has biased composition (polar residues).

It belongs to the connexin family. Gamma-type subfamily. As to quaternary structure, a connexon is composed of a hexamer of connexins. Interacts with CNST.

The protein localises to the cell membrane. It is found in the cell junction. Its subcellular location is the gap junction. One gap junction consists of a cluster of closely packed pairs of transmembrane channels, the connexons, through which materials of low MW diffuse from one cell to a neighboring cell. This is Gap junction gamma-1 protein (GJC1) from Homo sapiens (Human).